The primary structure comprises 502 residues: 4,4'-diapophytoene desaturase (4,4'-diaponeurosporene-forming) (502 aa).

Residue 5–17 (VIGAGVTGLAAAA) coordinates FAD.

This sequence belongs to the carotenoid/retinoid oxidoreductase family. CrtN subfamily.

The enzyme catalyses 15-cis-4,4'-diapophytoene + 3 FAD + 3 H(+) = all-trans-4,4'-diaponeurosporene + 3 FADH2. It functions in the pathway carotenoid biosynthesis; staphyloxanthin biosynthesis; staphyloxanthin from farnesyl diphosphate: step 2/5. Involved in the biosynthesis of the yellow-orange carotenoid staphyloxanthin, which plays a role in the virulence via its protective function against oxidative stress. Catalyzes three successive dehydrogenation reactions that lead to the introduction of three double bonds into 4,4'-diapophytoene (dehydrosqualene), with 4,4'-diapophytofluene and 4,4'-diapo-zeta-carotene as intermediates, and 4,4'-diaponeurosporene (the major deep-yellow pigment in staphylococci strains) as the end product. The chain is 4,4'-diapophytoene desaturase (4,4'-diaponeurosporene-forming) from Staphylococcus aureus (strain bovine RF122 / ET3-1).